The following is a 146-amino-acid chain: Vascular endothelial growth factor A (146 aa).

Positions 1–26 (MNFLLSWVHWSLALLLYLHHAKWSQA) are cleaved as a signal peptide. Cystine bridges form between cysteine 51/cysteine 93, cysteine 82/cysteine 127, and cysteine 86/cysteine 129. N-linked (GlcNAc...) asparagine glycosylation is present at asparagine 100.

This sequence belongs to the PDGF/VEGF growth factor family. Homodimer; disulfide-linked. Also found as heterodimer with PGF. Interacts with NRP1. Interacts with isoform 2 of BSG. Interacts with CD82; this interaction inhibits VEGFA-mediated signaling pathway.

Its function is as follows. Growth factor active in angiogenesis, vasculogenesis and endothelial cell growth. Induces endothelial cell proliferation, promotes cell migration, inhibits apoptosis and induces permeabilization of blood vessels. Binds to the FLT1/VEGFR1 and KDR/VEGFR2 receptors, heparan sulfate and heparin. Binding to NRP1 receptor initiates a signaling pathway needed for motor neuron axon guidance and cell body migration, including for the caudal migration of facial motor neurons from rhombomere 4 to rhombomere 6 during embryonic development. Also binds the DEAR/FBXW7-AS1 receptor. The chain is Vascular endothelial growth factor A (VEGFA) from Ovis aries (Sheep).